Here is a 435-residue protein sequence, read N- to C-terminus: Probable exopolygalacturonase B (435 aa).

A signal peptide spans 1–15 (MKFFTAALFASAVSA). N-linked (GlcNAc...) asparagine glycans are attached at residues N59, N184, and N224. The Proton donor role is filled by D254. A disulfide bridge links C256 with C273. N-linked (GlcNAc...) asparagine glycans are attached at residues N262 and N274. H277 is an active-site residue. Residues N301, N328, N365, and N368 are each glycosylated (N-linked (GlcNAc...) asparagine). C391 and C397 are oxidised to a cystine.

It belongs to the glycosyl hydrolase 28 family.

The protein localises to the secreted. The enzyme catalyses [(1-&gt;4)-alpha-D-galacturonosyl](n) + H2O = alpha-D-galacturonate + [(1-&gt;4)-alpha-D-galacturonosyl](n-1). In terms of biological role, specific in hydrolyzing the terminal glycosidic bond of polygalacturonic acid and oligogalacturonates. This is Probable exopolygalacturonase B (pgxB) from Aspergillus terreus (strain NIH 2624 / FGSC A1156).